The primary structure comprises 252 residues: Imidazole glycerol phosphate synthase subunit HisF (252 aa).

Residues Asp-11 and Asp-130 contribute to the active site.

Belongs to the HisA/HisF family. In terms of assembly, heterodimer of HisH and HisF.

It is found in the cytoplasm. It catalyses the reaction 5-[(5-phospho-1-deoxy-D-ribulos-1-ylimino)methylamino]-1-(5-phospho-beta-D-ribosyl)imidazole-4-carboxamide + L-glutamine = D-erythro-1-(imidazol-4-yl)glycerol 3-phosphate + 5-amino-1-(5-phospho-beta-D-ribosyl)imidazole-4-carboxamide + L-glutamate + H(+). The protein operates within amino-acid biosynthesis; L-histidine biosynthesis; L-histidine from 5-phospho-alpha-D-ribose 1-diphosphate: step 5/9. IGPS catalyzes the conversion of PRFAR and glutamine to IGP, AICAR and glutamate. The HisF subunit catalyzes the cyclization activity that produces IGP and AICAR from PRFAR using the ammonia provided by the HisH subunit. The polypeptide is Imidazole glycerol phosphate synthase subunit HisF (Persephonella marina (strain DSM 14350 / EX-H1)).